A 336-amino-acid chain; its full sequence is Mitochondrial import receptor subunit TOM40 homolog (336 aa).

The disordered stretch occupies residues 1–58 (MGNVLAASSPAPPPAGSPPVPGLVSVPPGFTMPPVAGLTPTPDKKEPQEERLPNPGTF). Over residues 10–21 (PAPPPAGSPPVP) the composition is skewed to pro residues. Basic and acidic residues predominate over residues 42 to 52 (PDKKEPQEERL).

It belongs to the Tom40 family. Forms part of the preprotein translocase complex of the outer mitochondrial membrane (TOM complex). Interacts with mitochondrial targeting sequences.

The protein resides in the mitochondrion outer membrane. Its function is as follows. Channel-forming protein essential for import of protein precursors into mitochondria. The polypeptide is Mitochondrial import receptor subunit TOM40 homolog (tomm40) (Xenopus laevis (African clawed frog)).